We begin with the raw amino-acid sequence, 411 residues long: Adherens junction-associated protein 1 (411 aa).

Positions 1 to 43 (MWIQQLLGLSSMSIRWPGRPLGSHAWILIAMFQLAVDLPACEA) are cleaved as a signal peptide. Over 44-282 (LGPGPEFWLL…GEASGLAVHQ (239 aa)) the chain is Extracellular. Disordered regions lie at residues 89 to 108 (IHGQ…RDQA), 115 to 197 (AGLA…SNTF), and 239 to 268 (SLDP…VTQP). Residues 115 to 146 (AGLAKPPAAAKSSPSLASSSSSSSSAVAGGAP) are compositionally biased toward low complexity. Over residues 166 to 178 (SFDSRGSRPTTET) the composition is skewed to polar residues. Residues 247-263 (PGGVSTTEPSTSPSNNG) show a composition bias toward low complexity. A helical transmembrane segment spans residues 283–303 (IITITVSLIMVIAALITTLVL). Positions 303–411 (LKNCCAQSGN…VSEKWFEISC (109 aa)) are targeting signals. At 304–411 (KNCCAQSGNT…VSEKWFEISC (108 aa)) the chain is on the cytoplasmic side. The interval 311–330 (GNTRRNSHQRKTNQQEESCQ) is disordered.

As to quaternary structure, forms a complex with CDH1 and CTNNB1; interacts directly with CTNNB1. Interacts with AP1M2. Interacts with isoform 2 of BSG/CD147. In terms of processing, thr-237 and Ser-239 may be phosphorylated; however as this position is probably extracellular, the in vivo relevance is not proven. As to expression, expressed in uterus and pancreas (at protein level).

It is found in the basolateral cell membrane. The protein localises to the apical cell membrane. The protein resides in the cell junction. Its subcellular location is the adherens junction. Its function is as follows. Plays a role in cell adhesion and cell migration. The sequence is that of Adherens junction-associated protein 1 (AJAP1) from Homo sapiens (Human).